A 573-amino-acid polypeptide reads, in one-letter code: MLFNEFCKIIEKIENTPKRLEKIDYFVEIIDFVKNHGKPENLKEICQVSIGRVFAEYENREIGIGPNLLIEAIKTTGISENDLNLKIKETGDIGISVEHLSSKIKQISLFNEPLTFEEVYSTIKKLSTIEGTSSQKKKIRIISNLLIIANPIESRYISRLILEDMRIGMNIPTILAAFSNYFGIEKEKIEKVYAVTNDIGLIGKKLLENSNFEEDPELNLTVFRPIKPMLAQLTPSIEEAVIEMKNPQFETKYDGARVQVHKSNGEVKIYSRRLEDITNSVPELVLEIKNLEVDNVILEGECVAMNLENGKPRPFQDILRRFRRKYDIDKMTEEVSLRIYFFDILYHNKGLIDLPLFERRNILENIFGTNNWDLELKKIENEIKSNKMLFTSFKVSSTDLKIAKEFFKWSLSIGHEGIMVKNLNAIYTPGSRVKTMCKIKQTLENLDVVVTRAKIGMGKRKDWYGSYEISVKGDDESLHVIGNVGSGLTEEDLEKLTKIANEIKIEDLGGEVILEPKIVLEVTYEEIQTSEKYEMGYALRFPRVVGIREDKSINDINSLDDVKKIYEIERKRK.

Glu250 is an ATP binding site. Lys252 serves as the catalytic N6-AMP-lysine intermediate. Positions 257, 272, 301, 342, 432, and 438 each coordinate ATP.

The protein belongs to the ATP-dependent DNA ligase family. The cofactor is Mg(2+).

The catalysed reaction is ATP + (deoxyribonucleotide)n-3'-hydroxyl + 5'-phospho-(deoxyribonucleotide)m = (deoxyribonucleotide)n+m + AMP + diphosphate.. Functionally, DNA ligase that seals nicks in double-stranded DNA during DNA replication, DNA recombination and DNA repair. This Methanococcus vannielii (strain ATCC 35089 / DSM 1224 / JCM 13029 / OCM 148 / SB) protein is DNA ligase.